A 122-amino-acid chain; its full sequence is Large ribosomal subunit protein uL14c (122 aa).

This sequence belongs to the universal ribosomal protein uL14 family. Part of the 50S ribosomal subunit.

Its subcellular location is the plastid. The protein resides in the chloroplast. In terms of biological role, binds to 23S rRNA. In Dioscorea elephantipes (Elephant's foot yam), this protein is Large ribosomal subunit protein uL14c.